We begin with the raw amino-acid sequence, 75 residues long: Exodeoxyribonuclease 7 small subunit (75 aa).

It belongs to the XseB family. As to quaternary structure, heterooligomer composed of large and small subunits.

It is found in the cytoplasm. The catalysed reaction is Exonucleolytic cleavage in either 5'- to 3'- or 3'- to 5'-direction to yield nucleoside 5'-phosphates.. Functionally, bidirectionally degrades single-stranded DNA into large acid-insoluble oligonucleotides, which are then degraded further into small acid-soluble oligonucleotides. This Nostoc punctiforme (strain ATCC 29133 / PCC 73102) protein is Exodeoxyribonuclease 7 small subunit.